The following is a 451-amino-acid chain: Jacalin-related lectin 35 (451 aa).

N-acetylalanine is present on alanine 2. 3 Jacalin-type lectin domains span residues 2-143 (AKKL…YIIP), 156-297 (LTKL…YIIP), and 306-448 (SNTI…NVAP).

It belongs to the jacalin lectin family. In terms of assembly, component of the PYK10 complex, at least composed of PYK10/BGLU23, BGLU21, BGLU22, JAL22, JAL23, PBP1/JAL30, PBP2/JAL31, JAL32, JAL33, JAL34, JAL35, GLL22 and GLL23.

This chain is Jacalin-related lectin 35 (JAL35), found in Arabidopsis thaliana (Mouse-ear cress).